The sequence spans 119 residues: Autophagy-related protein 8c (119 aa).

Residue Gly-117 is the site of Phosphatidylethanolamine amidated glycine attachment. Residues 118–119 (LV) constitute a propeptide, removed in mature form.

It belongs to the ATG8 family. Interacts with ATG4. Interacts with NBR1. Post-translationally, the C-terminal 2 residues are removed by ATG4 to expose Gly-117 at the C-terminus. This Gly-117 forms then a thioester bond with the 'Cys-558' of ATG7 (E1-like activating enzyme) before being transferred to the 'Cys-258' of ATG3 (the specific E2 conjugating enzyme), in order to be finally amidated with phosphatidylethanolamine. This lipid modification anchors ATG8 to autophagosomes. Constitutively expressed.

It localises to the cytoplasmic vesicle. It is found in the autophagosome membrane. The protein localises to the vacuole membrane. Its subcellular location is the cytoplasm. The protein resides in the cytoskeleton. Its function is as follows. Ubiquitin-like modifier involved in autophagosomes formation. May mediate the delivery of the autophagosomes to the vacuole via the microtubule cytoskeleton. The chain is Autophagy-related protein 8c (ATG8C) from Arabidopsis thaliana (Mouse-ear cress).